The primary structure comprises 199 residues: Recombination protein RecR (199 aa).

A C4-type zinc finger spans residues 56–71 (CTVCFNVTEQETCNIC). Positions 79–174 (SVICVVEESK…TVTRLASGLP (96 aa)) constitute a Toprim domain.

The protein belongs to the RecR family.

May play a role in DNA repair. It seems to be involved in an RecBC-independent recombinational process of DNA repair. It may act with RecF and RecO. The protein is Recombination protein RecR of Paenarthrobacter aurescens (strain TC1).